The chain runs to 465 residues: Argininosuccinate lyase (465 aa).

The protein belongs to the lyase 1 family. Argininosuccinate lyase subfamily.

The protein localises to the cytoplasm. It catalyses the reaction 2-(N(omega)-L-arginino)succinate = fumarate + L-arginine. It functions in the pathway amino-acid biosynthesis; L-arginine biosynthesis; L-arginine from L-ornithine and carbamoyl phosphate: step 3/3. This chain is Argininosuccinate lyase, found in Deinococcus geothermalis (strain DSM 11300 / CIP 105573 / AG-3a).